A 185-amino-acid chain; its full sequence is Ribosome maturation factor RimM (185 aa).

The 77-residue stretch at 92–168 (DDDTFYHADL…GRRVVVAEAF (77 aa)) folds into the PRC barrel domain.

It belongs to the RimM family. In terms of assembly, binds ribosomal protein uS19.

Its subcellular location is the cytoplasm. In terms of biological role, an accessory protein needed during the final step in the assembly of 30S ribosomal subunit, possibly for assembly of the head region. Essential for efficient processing of 16S rRNA. May be needed both before and after RbfA during the maturation of 16S rRNA. It has affinity for free ribosomal 30S subunits but not for 70S ribosomes. This Xanthobacter autotrophicus (strain ATCC BAA-1158 / Py2) protein is Ribosome maturation factor RimM.